The following is a 96-amino-acid chain: MEKNKHCFYVVECSDGSYYAGYTNHIEKRIGTHNSGRGAKYTRARLPVVLKYVEFHEDKRTAMQAEYYFKQLNRKQKEEYMQKGERYVATKKLSTK.

The 76-residue stretch at 4–79 folds into the GIY-YIG domain; it reads NKHCFYVVEC…KQLNRKQKEE (76 aa).

This sequence belongs to the UPF0213 family.

The polypeptide is UPF0213 protein BCE33L0031 (Bacillus cereus (strain ZK / E33L)).